The following is a 33-amino-acid chain: Trypsin inhibitor 1 (33 aa).

Intrachain disulfides connect Cys1/Cys17, Cys8/Cys21, and Cys16/Cys32.

Expressed in leaves and fruit flesh (at protein level).

Inhibits trypsin (IC(50)=471 nM). The protein is Trypsin inhibitor 1 of Beta vulgaris subsp. vulgaris (Beet).